Consider the following 313-residue polypeptide: Homoserine O-succinyltransferase (313 aa).

Residue cysteine 142 is the Acyl-thioester intermediate of the active site. Residues lysine 163 and serine 192 each coordinate substrate. Histidine 235 serves as the catalytic Proton acceptor. Residue glutamate 237 is part of the active site. Arginine 249 is a substrate binding site.

It belongs to the MetA family.

Its subcellular location is the cytoplasm. The enzyme catalyses L-homoserine + succinyl-CoA = O-succinyl-L-homoserine + CoA. Its pathway is amino-acid biosynthesis; L-methionine biosynthesis via de novo pathway; O-succinyl-L-homoserine from L-homoserine: step 1/1. In terms of biological role, transfers a succinyl group from succinyl-CoA to L-homoserine, forming succinyl-L-homoserine. This is Homoserine O-succinyltransferase from Shewanella sp. (strain MR-4).